The sequence spans 179 residues: Crossover junction endodeoxyribonuclease RuvC (179 aa).

Active-site residues include Asp7 and Glu67. Mn(2+)-binding residues include Asp7 and Glu67. Residues Asp68–Gln74 carry the DNA-binding loop motif. Catalysis depends on residues His139 and Asp142. Residue His139 participates in Mn(2+) binding.

It belongs to the RuvC family. Homodimer which binds Holliday junction (HJ) DNA. The HJ becomes 2-fold symmetrical on binding to RuvC with unstacked arms; it has a different conformation from HJ DNA in complex with RuvA. In the full resolvosome a probable DNA-RuvA(4)-RuvB(12)-RuvC(2) complex forms which resolves the HJ. Requires Mn(2+) as cofactor.

It is found in the cytoplasm. The enzyme catalyses Endonucleolytic cleavage at a junction such as a reciprocal single-stranded crossover between two homologous DNA duplexes (Holliday junction).. The RuvA-RuvB-RuvC complex processes Holliday junction (HJ) DNA during genetic recombination and DNA repair. Endonuclease that resolves HJ intermediates. Cleaves cruciform DNA by making single-stranded nicks across the HJ at symmetrical positions within the homologous arms, probably yielding a 5'-phosphate and a 3'-hydroxyl group; requires a central core of homology in the junction. The consensus cleavage sequence is 5'-(G/C)TC(C/G)-3' (a different site than E.coli); cleavage occurs on the 3'-side of the TC dinucleotide at the point of strand exchange. Also resolves nicked HJ intermediates, replication forks and Y-junction DNA in vitro. HJ branch migration catalyzed by RuvA-RuvB allows RuvC to scan DNA until it finds its consensus sequence, where it cleaves and resolves the cruciform DNA. Functionally, binds HJ DNA independently of homologous core or consensus sequence; Mn(2+) is not essential for binding but improves it, while &gt;1.0 mM Mg(2+) inhibit binding. Also binds Y-junction DNA less well. Requires a homologous core to cleave DNA. Another study shows divalent cations (Mn(2+), Mg(2+) and Ca(2+), tested up to 5.0 mM) improve DNA binding considerably over binding in their absence. The sequence is that of Crossover junction endodeoxyribonuclease RuvC from Deinococcus radiodurans (strain ATCC 13939 / DSM 20539 / JCM 16871 / CCUG 27074 / LMG 4051 / NBRC 15346 / NCIMB 9279 / VKM B-1422 / R1).